The following is a 256-amino-acid chain: Acetyl-coenzyme A carboxylase carboxyl transferase subunit alpha (256 aa).

Positions Met1–Gln236 constitute a CoA carboxyltransferase C-terminal domain.

Belongs to the AccA family. As to quaternary structure, acetyl-CoA carboxylase is a heterohexamer composed of biotin carboxyl carrier protein (AccB), biotin carboxylase (AccC) and two subunits each of ACCase subunit alpha (AccA) and ACCase subunit beta (AccD).

Its subcellular location is the cytoplasm. It carries out the reaction N(6)-carboxybiotinyl-L-lysyl-[protein] + acetyl-CoA = N(6)-biotinyl-L-lysyl-[protein] + malonyl-CoA. The protein operates within lipid metabolism; malonyl-CoA biosynthesis; malonyl-CoA from acetyl-CoA: step 1/1. In terms of biological role, component of the acetyl coenzyme A carboxylase (ACC) complex. First, biotin carboxylase catalyzes the carboxylation of biotin on its carrier protein (BCCP) and then the CO(2) group is transferred by the carboxyltransferase to acetyl-CoA to form malonyl-CoA. The polypeptide is Acetyl-coenzyme A carboxylase carboxyl transferase subunit alpha (Streptococcus equi subsp. zooepidemicus (strain H70)).